We begin with the raw amino-acid sequence, 555 residues long: Methionine--tRNA ligase (555 aa).

A 'HIGH' region motif is present at residues 13 to 23 (PYANGSLHIGH). Cysteine 144, cysteine 147, cysteine 157, and cysteine 160 together coordinate Zn(2+). Positions 330-334 (KISKS) match the 'KMSKS' region motif. Lysine 333 provides a ligand contact to ATP.

The protein belongs to the class-I aminoacyl-tRNA synthetase family. MetG type 1 subfamily. In terms of assembly, monomer. Requires Zn(2+) as cofactor.

Its subcellular location is the cytoplasm. The catalysed reaction is tRNA(Met) + L-methionine + ATP = L-methionyl-tRNA(Met) + AMP + diphosphate. In terms of biological role, is required not only for elongation of protein synthesis but also for the initiation of all mRNA translation through initiator tRNA(fMet) aminoacylation. The chain is Methionine--tRNA ligase from Blochmanniella pennsylvanica (strain BPEN).